A 370-amino-acid chain; its full sequence is Cobalt-precorrin-5B C(1)-methyltransferase (370 aa).

This sequence belongs to the CbiD family.

The catalysed reaction is Co-precorrin-5B + S-adenosyl-L-methionine = Co-precorrin-6A + S-adenosyl-L-homocysteine. It participates in cofactor biosynthesis; adenosylcobalamin biosynthesis; cob(II)yrinate a,c-diamide from sirohydrochlorin (anaerobic route): step 6/10. Functionally, catalyzes the methylation of C-1 in cobalt-precorrin-5B to form cobalt-precorrin-6A. The protein is Cobalt-precorrin-5B C(1)-methyltransferase of Pseudomonas syringae pv. tomato (strain ATCC BAA-871 / DC3000).